A 732-amino-acid chain; its full sequence is MDAKTDDKDGGKCPFPHGGGRGRRNSDWWPEHLDISLLHRNSTLSDPMGKGFDYAREFESLDLDAVIKDLHALMTDSQDWWPADFGHYGGLMVRMAWHSAGTYRTTDGRGGAGAGQQRFAPLNSWPDNANLDKARRLLWPIKQKYGNKISWADLYVLTGNVALESMGFKTFGFAGGRADTWEPEELFWGPEGSWLGDERYSGERELSDPLGAVQMGLIYVNPEGPNGNPDPVAAAKDIRETFARMAMNDEETVALIAGGHTFGKTHGAGDPSLIGAEPEGGALEDQGLGWKSSFGTGFGADAITGGPEVIWTQTPTQWSNHFFENLFGFEWELDKSPAGAKQWKAKGAEANIPDPFDPTKKRLPTMLTTDLSLRFDPAYEKISRRFLENPDQFADAFARAWFKLTHRDMGPKVRYRGKLVPKEDLIWQDPIPPVDHELVGDKDIAALKAKILGSGLSVSQLVSAAFASASTYRHSDKRGGANGARIRFAPQKDWEVNQPSDLAQVLSKLEAIQKEFNGAQTDGKKVSLADLIVLGGCAAVEKAAKDAGTDIQVPFTPGRMDALEEQTDADSFKVLEPRADGFRNFIGKRKQYMSPEESLVDRAQLLNLTAPEMTALLGGLRVLGGNVGHTTHGVFTERPEKLTNDFFVNLLDMKTAWSPSATTEVVYEGRDRKTGELRWTGTRVDLIFGSHSQLRALAEVYAQSDAQPKFARDFVAAWTKVMNADRFDIVAK.

Residues 1 to 11 are compositionally biased toward basic and acidic residues; sequence MDAKTDDKDGG. Positions 1–24 are disordered; it reads MDAKTDDKDGGKCPFPHGGGRGRR. The tryptophyl-tyrosyl-methioninium (Trp-Tyr) (with M-245) cross-link spans 97–219; sequence WHSAGTYRTT…LGAVQMGLIY (123 aa). H98 functions as the Proton acceptor in the catalytic mechanism. Positions 219 to 245 form a cross-link, tryptophyl-tyrosyl-methioninium (Tyr-Met) (with W-97); that stretch reads YVNPEGPNGNPDPVAAAKDIRETFARM. H260 contacts heme b.

It belongs to the peroxidase family. Peroxidase/catalase subfamily. Homodimer or homotetramer. The cofactor is heme b. In terms of processing, formation of the three residue Trp-Tyr-Met cross-link is important for the catalase, but not the peroxidase activity of the enzyme.

It catalyses the reaction H2O2 + AH2 = A + 2 H2O. The enzyme catalyses 2 H2O2 = O2 + 2 H2O. Bifunctional enzyme with both catalase and broad-spectrum peroxidase activity. The chain is Catalase-peroxidase from Rhodopseudomonas palustris (strain HaA2).